A 117-amino-acid chain; its full sequence is Big defensin (117 aa).

Residues 1–23 form the signal peptide; the sequence is MEKKTAYCLLFLVLLVPYTALGA. The propeptide occupies 24–33; that stretch reads VLKRAPAKKE. Disulfide bonds link Cys-82/Cys-112, Cys-89/Cys-107, and Cys-93/Cys-113.

Belongs to the big defensin family.

The protein resides in the secreted. Significantly inhibits the growth of Gram-negative and Gram-positive bacteria and fungi in vitro. This chain is Big defensin, found in Branchiostoma belcheri (Amphioxus).